Here is a 270-residue protein sequence, read N- to C-terminus: 3-methyl-2-oxobutanoate hydroxymethyltransferase (270 aa).

Aspartate 50 and aspartate 89 together coordinate Mg(2+). 3-methyl-2-oxobutanoate is bound by residues 50–51 (DS), aspartate 89, and lysine 118. Glutamate 120 lines the Mg(2+) pocket. Glutamate 187 functions as the Proton acceptor in the catalytic mechanism.

The protein belongs to the PanB family. As to quaternary structure, homodecamer; pentamer of dimers. Mg(2+) is required as a cofactor.

The protein localises to the cytoplasm. It catalyses the reaction 3-methyl-2-oxobutanoate + (6R)-5,10-methylene-5,6,7,8-tetrahydrofolate + H2O = 2-dehydropantoate + (6S)-5,6,7,8-tetrahydrofolate. Its pathway is cofactor biosynthesis; (R)-pantothenate biosynthesis; (R)-pantoate from 3-methyl-2-oxobutanoate: step 1/2. Functionally, catalyzes the reversible reaction in which hydroxymethyl group from 5,10-methylenetetrahydrofolate is transferred onto alpha-ketoisovalerate to form ketopantoate. The sequence is that of 3-methyl-2-oxobutanoate hydroxymethyltransferase from Helicobacter acinonychis (strain Sheeba).